The following is a 255-amino-acid chain: Tabinhibitin 2 (255 aa).

Residues 1–23 (MISILVSRFLLAALVLQYATIDA) form the signal peptide. Positions 32–34 (RGD) match the Cell attachment site motif. The SCP domain maps to 67–211 (LSKINDVRDH…KARALLTCNF (145 aa)).

The protein belongs to the CRISP family. As to expression, expressed in salivary glands.

It localises to the secreted. Its function is as follows. Inhibits platelet aggregation induced by all agonists tested (ADP, arachidonic acid, the thromboxane A2 analog U46619, thrombin, and snake venom snaclecs (TMVA that activates platelet through GPIB, and stejnulxin that specifically acts through GPVI (GP6))). May act by competing with fibrinogen for binding to glycoprotein IIb/IIIa (ITGA2B/ITGB3). The chain is Tabinhibitin 2 from Tabanus yao (Horsefly).